Here is a 138-residue protein sequence, read N- to C-terminus: ER-derived vesicles protein ERV14 (138 aa).

The Cytoplasmic portion of the chain corresponds to 2 to 6; it reads GAWLF. Residues 7-27 traverse the membrane as a helical segment; it reads ILAVVVNCINLFGQVHFTILY. Topologically, residues 28–52 are extracellular; the sequence is ADLEADYINPIELCSKVNKLITPEA. Residues 53 to 73 form a helical membrane-spanning segment; sequence ALHGALSLLFLLNGYWFVFLL. The Cytoplasmic segment spans residues 74 to 111; that stretch reads NLPVLAYNLNKIYNKVQLLDATEIFRTLGKHKRESFLK. A helical transmembrane segment spans residues 112–132; the sequence is LGFHLLMFFFYLYRMIMALIA. The Extracellular segment spans residues 133–138; that stretch reads ESGDDF.

This sequence belongs to the cornichon family.

The protein resides in the endoplasmic reticulum membrane. The protein localises to the golgi apparatus membrane. Its function is as follows. Could regulate export of the bud site and axial growth sites selection protein AXL2 and possibly other secretory proteins from the endoplasmic reticulum in COPII-coated vesicles. Seems to be required for axial budding pattern in haploid cells. The polypeptide is ER-derived vesicles protein ERV14 (ERV14) (Saccharomyces cerevisiae (strain ATCC 204508 / S288c) (Baker's yeast)).